The primary structure comprises 460 residues: Lipase member H-B (460 aa).

A signal peptide spans 1-26 (MLLSFYFNGLLLVGCLLSWGRSDTEG). N-linked (GlcNAc...) asparagine glycans are attached at residues N67 and N75. The Nucleophile role is filled by S163. N177 carries N-linked (GlcNAc...) asparagine glycosylation. The active-site Charge relay system is the D187. An intrachain disulfide couples C242 to C255. The active-site Charge relay system is the H257. 2 disulfide bridges follow: C279–C290 and C293–C301. N289 is a glycosylation site (N-linked (GlcNAc...) asparagine). N366 is a glycosylation site (N-linked (GlcNAc...) asparagine). C436 and C455 are joined by a disulfide.

Belongs to the AB hydrolase superfamily. Lipase family.

It is found in the secreted. It localises to the cell membrane. The enzyme catalyses 1-hexadecanoyl-2-(9Z-octadecenoyl)-sn-glycero-3-phosphate + H2O = 2-(9Z-octadecenoyl)-sn-glycero-3-phosphate + hexadecanoate + H(+). Functionally, hydrolyzes specifically phosphatidic acid (PA) to produce 2-acyl lysophosphatidic acid (LPA; a potent bioactive lipid mediator) and fatty acid. Does not hydrolyze other phospholipids, like phosphatidylserine (PS), phosphatidylcholine (PC) and phosphatidylethanolamine (PE) or triacylglycerol (TG). The chain is Lipase member H-B (liph-b) from Xenopus laevis (African clawed frog).